Reading from the N-terminus, the 37-residue chain is Large ribosomal subunit protein bL36 (37 aa).

This sequence belongs to the bacterial ribosomal protein bL36 family.

This chain is Large ribosomal subunit protein bL36, found in Deinococcus deserti (strain DSM 17065 / CIP 109153 / LMG 22923 / VCD115).